An 82-amino-acid chain; its full sequence is Large ribosomal subunit protein bL31B (82 aa).

This sequence belongs to the bacterial ribosomal protein bL31 family. Type B subfamily. As to quaternary structure, part of the 50S ribosomal subunit after the end of exponential growth.

While neither of the L31 paralogs is essential, this protein does not seem to function as the main L31 protein. Has a higher affinity for 70S ribosomes than the zinc-containing L31 paralog; is able to displace it to varying extents, even under zinc-replete conditions. This chain is Large ribosomal subunit protein bL31B (rpmE2), found in Bacillus subtilis (strain 168).